We begin with the raw amino-acid sequence, 810 residues long: Oligoxyloglucan-reducing end-specific xyloglucanase (810 aa).

A signal peptide spans 1-28; sequence MRAKNGPGSWLALTAIATSLNTLALAAA. Asn-32 carries N-linked (GlcNAc...) asparagine glycosylation. Residue Asp-66 is the Nucleophile of the active site. The stretch at 126-135 is one BNR 1 repeat; the sequence is FVSQDRGATF. The N-linked (GlcNAc...) asparagine glycan is linked to Asn-188. A BNR 2 repeat occupies 226–236; that stretch reads YVTRDSGESWE. 3 N-linked (GlcNAc...) asparagine glycosylation sites follow: Asn-298, Asn-312, and Asn-321. The BNR 3 repeat unit spans residues 359–369; the sequence is YLSHDGGKSWK. Asn-455 is a glycosylation site (N-linked (GlcNAc...) asparagine). Asp-498 functions as the Proton donor in the catalytic mechanism. Residue Asn-544 is glycosylated (N-linked (GlcNAc...) asparagine). The stretch at 554-564 is one BNR 4 repeat; that stretch reads YSADGGSSWTK. 2 N-linked (GlcNAc...) asparagine glycosylation sites follow: Asn-573 and Asn-612. Residues 617-626 form a BNR 5 repeat; that stretch reads YVTTDLGQTW. Asn-638 carries an N-linked (GlcNAc...) asparagine glycan. BNR repeat units lie at residues 658–667, 705–716, and 759–769; these read YLSRDGGLSY, YHTRNFGKKWTK, and YRSDDNGKTWV.

The protein belongs to the glycosyl hydrolase 74 family.

Its subcellular location is the secreted. It catalyses the reaction Hydrolysis of cellobiose from the reducing end of xyloglucans consisting of a beta-(1-&gt;4)-linked glucan carrying alpha-D-xylosyl groups on O-6 of the glucose residues. To be a substrate, the first residue must be unsubstituted, the second residue may bear a xylosyl group, whether further glycosylated or not, and the third residue, which becomes the new terminus by the action of the enzyme, is preferably xylosylated, but this xylose residue must not be further substituted.. Oligoxyloglucan-reducing end-specific xyloglucanase involved in degradation of xyloglucans. Releases the first two glycosyl segments from oligoxyloglucans. Active against cotton xyloglucan, tamarind xyloglucan and tamarind xyloglucan oligomers. In Emericella nidulans (strain FGSC A4 / ATCC 38163 / CBS 112.46 / NRRL 194 / M139) (Aspergillus nidulans), this protein is Oligoxyloglucan-reducing end-specific xyloglucanase (xgcA).